Consider the following 173-residue polypeptide: Large ribosomal subunit protein bL9 (173 aa).

The protein belongs to the bacterial ribosomal protein bL9 family.

Functionally, binds to the 23S rRNA. This chain is Large ribosomal subunit protein bL9, found in Rickettsia bellii (strain RML369-C).